The following is a 400-amino-acid chain: F-box/LRR-repeat protein 14 (400 aa).

One can recognise an F-box domain in the interval 2-48 (ETHISCLFPELLAMIFGYLDVRDKGRAAQVCTAWRDAAYHKSVWRGV). Positions 2–48 (ETHISCLFPELLAMIFGYLDVRDKGRAAQVCTAWRDAAYHKSVWRGV) are required for down-regulation of SNAI1. LRR repeat units follow at residues 144–163 (GLEVLELGGCSNITNTGLLL), 170–191 (RLKSLNLRSCRHLSDVGIGHLA), 203–225 (GLEQLTLQDCQKLTDLSLKHISR), 229–250 (GLRLLNLSFCGGISDAGLLHLS), and 254–275 (SLRSLNLRSCDNISDTGIMHLA).

In terms of assembly, part of a SCF (SKP1-cullin-F-box) ubiquitin-protein ligase complex. Interacts with SKP1 and CUL1. Interacts with SNAI1; the interaction requires the phosphorylation of the two serine residues in the substrate destruction motif D-S-G-X(2,3,4)-S.

The protein localises to the cytoplasm. In terms of biological role, substrate-recognition component of some SCF (SKP1-CUL1-F-box protein)-type E3 ubiquitin-protein ligase complexes. The SCF(FBXL14) complex acts by mediating ubiquitination and subsequent degradation of SNAI1. This is F-box/LRR-repeat protein 14 (FBXL14) from Bos taurus (Bovine).